The chain runs to 1241 residues: MSSAPRRPAKGADSFCTPEPESLGPGTPGFPEQEEDELHRTLGVERFEEILQEAGSRGGEEPGRSYGEEDFEYHRQSSHHIHHPLSTHLPPDARRRKTPQGPGRKPRRRPGASPTGETPTIEEGEEDEDEASEAEGARALTQPSPVSTPSSVQFFLQEDDSADRKAERTSPSSPAPLPHQEATPRASKGAQAGTQVEEAEAEAVAVASGTAGGDDGGASGRPLPKAQPGHRSYNLQERRRIGSMTGAEQALLPRVPTDEIEAQTLATADLDLMKSHRFEDVPGVRRHLVRKNAKGSTQSGREGREPGPTPRARPRAPHKPHEVFVELNELLLDKNQEPQWRETARWIKFEEDVEEETERWGKPHVASLSFRSLLELRRTLAHGAVLLDLDQQTLPGVAHQVVEQMVISDQIKAEDRANVLRALLLKHSHPSDEKDFSFPRNISAGSLGSLLGHHHGQGAESDPHVTEPLMGGVPETRLEVERERELPPPAPPAGITRSKSKHELKLLEKIPENAEATVVLVGCVEFLSRPTMAFVRLREAVELDAVLEVPVPVRFLFLLLGPSSANMDYHEIGRSISTLMSDKQFHEAAYLADEREDLLTAINAFLDCSVVLPPSEVQGEELLRSVAHFQRQMLKKREEQGRLLPTGAGLEPKSAQDKALLQMVEAAGAAEDDPLRRTGRPFGGLIRDVRRRYPHYLSDFRDALDPQCLAAVIFIYFAALSPAITFGGLLGEKTQDLIGVSELIMSTALQGVVFCLLGAQPLLVIGFSGPLLVFEEAFFSFCSSNHLEYLVGRVWIGFWLVFLALLMVALEGSFLVRFVSRFTQEIFAFLISLIFIYETFYKLVKIFQEHPLHGCSASNSSEVDGGENMTWAGARPTLGPGNRSLAGQSGQGKPRGQPNTALLSLVLMAGTFFIAFFLRKFKNSRFFPGRIRRVIGDFGVPIAILIMVLVDYSIEDTYTQKLSVPSGFSVTAPEKRGWVINPLGEKSPFPVWMMVASLLPAILVFILIFMETQITTLIISKKERMLQKGSGFHLDLLLIVAMGGICALFGLPWLAAATVRSVTHANALTVMSKAVAPGDKPKIQEVKEQRVTGLLVALLVGLSIVIGDLLRQIPLAVLFGIFLYMGVTSLNGIQFYERLHLLLMPPKHHPDVTYVKKVRTLRMHLFTALQLLCLALLWAVMSTAASLAFPFILILTVPLRMVVLTRIFTDREMKCLDANEAEPVFDEREGVDEYNEMPMPV.

Residues 1 to 240 (MSSAPRRPAK…RSYNLQERRR (240 aa)) form a disordered region. The Cytoplasmic portion of the chain corresponds to 1-707 (MSSAPRRPAK…SDFRDALDPQ (707 aa)). 2 stretches are compositionally biased toward basic and acidic residues: residues 37–49 (ELHR…RFEE) and 58–75 (GGEE…EYHR). Basic residues-rich tracts occupy residues 76–85 (QSSHHIHHPL) and 94–110 (RRRK…RRRP). A phosphoserine mark is found at S113, S132, S144, S170, S172, and S173. The segment covering 120 to 133 (TIEEGEEDEDEASE) has biased composition (acidic residues). Residues 141–155 (TQPSPVSTPSSVQFF) show a composition bias toward low complexity. T183 is subject to Phosphothreonine. The segment covering 189–209 (GAQAGTQVEEAEAEAVAVASG) has biased composition (low complexity). Over residues 210–219 (TAGGDDGGAS) the composition is skewed to gly residues. Residue S243 is modified to Phosphoserine. T257 bears the Phosphothreonine mark. K274 carries the post-translational modification N6-methyllysine. Positions 288–320 (LVRKNAKGSTQSGREGREPGPTPRARPRAPHKP) are disordered. S443 bears the Phosphoserine mark. Positions 449–471 (SLLGHHHGQGAESDPHVTEPLMG) are disordered. Transmembrane regions (helical) follow at residues 708–731 (CLAA…GLLG), 737–774 (LIGV…LLVF), 784–816 (SNHL…SFLV), and 826–847 (IFAF…VKIF). The segment at 708–1241 (CLAAVIFIYF…DEYNEMPMPV (534 aa)) is membrane (anion exchange). Residues 848-900 (QEHPLHGCSASNSSEVDGGENMTWAGARPTLGPGNRSLAGQSGQGKPRGQPNT) are Extracellular-facing. N859, N868, and N882 each carry an N-linked (GlcNAc...) asparagine glycan. Residues 901–918 (ALLSLVLMAGTFFIAFFL) traverse the membrane as a helical segment. The Cytoplasmic portion of the chain corresponds to 919 to 933 (RKFKNSRFFPGRIRR). 5 consecutive transmembrane segments (helical) span residues 934-954 (VIGD…DYSI), 988-1010 (PFPV…LIFM), 1036-1059 (LLLI…AATV), 1091-1136 (VTGL…IQFY), and 1163-1199 (MHLF…TVPL). A lipid anchor (S-palmitoyl cysteine) is attached at C1173.

The protein belongs to the anion exchanger (TC 2.A.31) family. As to expression, expressed in the liver, stomach, kidney, prostate, thyroid and rectum. In terms of tissue distribution, expressed in the liver and kidney.

The protein resides in the apical cell membrane. It is found in the basolateral cell membrane. It catalyses the reaction hydrogencarbonate(in) + chloride(out) = hydrogencarbonate(out) + chloride(in). Functionally, sodium-independent anion exchanger which mediates the electroneutral exchange of chloride for bicarbonate ions across the cell membrane. Plays an important role in osteoclast differentiation and function. Regulates bone resorption and calpain-dependent actin cytoskeleton organization in osteoclasts via anion exchange-dependent control of pH. Essential for intracellular pH regulation in CD8(+) T-cells upon CD3 stimulation, modulating CD8(+) T-cell responses. The sequence is that of Anion exchange protein 2 (SLC4A2) from Homo sapiens (Human).